The following is a 1584-amino-acid chain: MSSVKVAVRVRPFNQREISNTSKCVLQVNGNTTTINGHSINKENFSFNFDHSYWSFARNDPHFITQKQVYEELGVEMLEHAFEGYNVCIFAYGQTGSGKSYTMMGKANDPDEMGIIPRLCNDLFARIDNNNDKDVQYSVEVSYMEIYCERVKDLLNPNSGGNLRVREHPLLGPYVDDLTKMAVCSYHDICNLMDEGNKARTVAATNMNSTSSRSHAVFTIVLTQKRHCADSNLDTEKHSKISLVDLAGSERANSTGAEGQRLKEGANINKSLTTLGLVISKLAEESTKKKKSNKGVIPYRDSVLTWLLRENLGGNSKTAMLAALSPADINFDETLSTLRYADRAKQIVCQAVVNEDPNAKLIRELNEEVIKLRHILKDKGIDVTDVQETPGKHKKGPKLPAHVHEQLEKLQESEKLMAEIGKTWEQKLIHTEEIRKQREEELRDMGLACAEDGTTLGVFSPKKLPHLVNLNEDPLMSECLIYYLKEGVTSVGRPEAEHRPDILLSGEAILELHCEFINEDGNVTLTMKPNASCYINGKQVTTPTVLHTGSRVILGEHHVFRYNDPQEARQSRHNLAAIAEQPIDWKYAQQELLDKQGIDLKADMEKKMLEMESQYRREKVELEQKMYHQTREYESMIENLQKQVDLAQSYISGGGSIWEGERMLTSSLLEFPEELKWTSDQKRVVLKAAIKWRYHQFTSVRDDLWGNAIFVKEANAISVELKKKVQFQFALLTDTMYSPLPPDLLPPGEDLTLRPYPKTVVAIQVQDLKNGATHYWSIEKLKQRLEAMRDMYETDAEMSPADGDPMMDALMGTDPFYDRFPWFRMVGRAFVYLNNLLHNVPLIHKVAVVNEKGEVKGYLKVAIEPVQKDEVINQKKGVRQTAKLHFRKEDFLKSHKNGETSDSDALAFPEHMQEEVEFCFRVVVLQAIDVADTYSDVFCQFNFLHRHDEAFSTEPMKNSKSPLTFEHTQNLHIKMSKTFLHYLHHFPIIFEVFGHFQPKSEQFNFERQNSALGRRLSTKLTFQQPSLVISTPVKSKKANAPIQNNNASVKSKHDLLVWFEICELANNGEYVPTIVDHAQGLPTHGIFLLHQGIQRRIKITICHEKGELKWKDCQELVVGRIRAGPEWAGGDDVDVLSLGLFPGTFMEFSMDDRTFFQFEAAWDSSLHNSPLLNRVSNYGDQIYMTLSAYMELDGCAQPAVVTKDLCLLIYARDSKISAASRFCRSLVGGISKSPEMNRVPGVYQLCLKDGSDSGSPGAIRRQRRVLDTSSAYVRGEENLGQWRPRGDSLIFEHQWELEKLTRLQQVERVRLFLRLRDRLKGKKNKGEARTPVSPCDPVCAIPESIKLDEKDKGIVGKVLGLIRRKIPMNKDPPTGNKAQELSDESGSNSITSPVSDKSLIKSSRSSDLLCRQKSKSDQNLASNDDIVDNLGGMKRSLSGSRILQLNILVPEVLEERVGVVVSKKGYMNFLEEKTQGWTRRWVIVRRPYILLFRDDRDLVIRGIINLANARIEHSEDQQAMVKVPNTFSVCTNQRGFLMQMMPGDEMYDWLYAINPLMAGQMKLHGNQNGTTLKSPTSSSSIAAS.

The 345-residue stretch at 3 to 347 folds into the Kinesin motor domain; the sequence is SVKVAVRVRP…LRYADRAKQI (345 aa). 93–100 provides a ligand contact to ATP; sequence GQTGSGKS. A microtubule-binding region spans residues 183–335; the sequence is VCSYHDICNL…PADINFDETL (153 aa). Coiled coils occupy residues 425-445, 598-652, and 777-797; these read EQKL…LRDM, IDLK…SYIS, and SIEK…TDAE. The interval 1366–1416 is disordered; sequence IPMNKDPPTGNKAQELSDESGSNSITSPVSDKSLIKSSRSSDLLCRQKSKS. Positions 1376–1394 are enriched in polar residues; the sequence is NKAQELSDESGSNSITSPV. Positions 1395–1409 are enriched in low complexity; that stretch reads SDKSLIKSSRSSDLL. The region spanning 1460 to 1558 is the PH domain; that stretch reads VVSKKGYMNF…WLYAINPLMA (99 aa).

This sequence belongs to the TRAFAC class myosin-kinesin ATPase superfamily. Kinesin family. Unc-104 subfamily. In terms of assembly, interacts with casy-1. Expressed in nerve ring, amphid commissure and ventral nerve cord (at protein level).

It is found in the cytoplasm. It localises to the cytoskeleton. The protein resides in the cell projection. Its subcellular location is the axon. Its function is as follows. Motor protein involved in microtubule-associated anterograde transport. Regulates the transport of synaptic vesicle precursors in the axon of DA motor neurons. Regulates the polarized sorting of axonal proteins. Essential for the transport of synaptic components during the synaptic remodeling of the DD motor neuron, probably downstream of cdk-5 and/or pct-1/cyy-1 complex. Required for the anterograde transport of neuropeptide-containing dense core vesicles along axons. Involved in necrotic cell death. The protein is Kinesin-like protein unc-104 (unc-104) of Caenorhabditis elegans.